Here is a 287-residue protein sequence, read N- to C-terminus: uncharacterized protein (287 aa).

The signal sequence occupies residues 1 to 20 (MKVICGSVFLFSLFFQVVLG). At 22-201 (YFSSSSGNPN…AFYGPRRNIK (180 aa)) the chain is on the extracellular side. Residues N120, N154, and N166 are each glycosylated (N-linked (GlcNAc...) asparagine). A helical transmembrane segment spans residues 202-222 (AAIAVPSVILGLILVALVYYA). Topologically, residues 223–287 (YRKDTWKIYM…YYQSQVKKFH (65 aa)) are cytoplasmic.

It is found in the membrane. This is an uncharacterized protein from Schizosaccharomyces pombe (strain 972 / ATCC 24843) (Fission yeast).